We begin with the raw amino-acid sequence, 229 residues long: UPF0173 metal-dependent hydrolase SAOUHSC_01815 (229 aa).

This sequence belongs to the UPF0173 family.

The sequence is that of UPF0173 metal-dependent hydrolase SAOUHSC_01815 from Staphylococcus aureus (strain NCTC 8325 / PS 47).